Consider the following 484-residue polypeptide: Probable cytosol aminopeptidase (484 aa).

Mn(2+) contacts are provided by Lys-256 and Asp-261. Residue Lys-268 is part of the active site. Asp-279, Asp-338, and Glu-340 together coordinate Mn(2+). The active site involves Arg-342.

It belongs to the peptidase M17 family. Mn(2+) serves as cofactor.

Its subcellular location is the cytoplasm. The enzyme catalyses Release of an N-terminal amino acid, Xaa-|-Yaa-, in which Xaa is preferably Leu, but may be other amino acids including Pro although not Arg or Lys, and Yaa may be Pro. Amino acid amides and methyl esters are also readily hydrolyzed, but rates on arylamides are exceedingly low.. The catalysed reaction is Release of an N-terminal amino acid, preferentially leucine, but not glutamic or aspartic acids.. Functionally, presumably involved in the processing and regular turnover of intracellular proteins. Catalyzes the removal of unsubstituted N-terminal amino acids from various peptides. This is Probable cytosol aminopeptidase from Actinobacillus succinogenes (strain ATCC 55618 / DSM 22257 / CCUG 43843 / 130Z).